A 116-amino-acid polypeptide reads, in one-letter code: uncharacterized protein (116 aa).

The chain crosses the membrane as a helical span at residues 20–42 (YLNKYYSVITYFLAFLTKFAILL). A disordered region spans residues 95–116 (IEFQSKSSPVPPASESNKGINE).

The protein localises to the membrane. This is an uncharacterized protein from Saccharomyces cerevisiae (strain ATCC 204508 / S288c) (Baker's yeast).